A 140-amino-acid polypeptide reads, in one-letter code: Granulocyte-macrophage colony-stimulating factor (140 aa).

The first 17 residues, 1-17 (MWLQNLLLLGTVVCSIC), serve as a signal peptide directing secretion. A glycan (O-linked (GalNAc...) serine) is linked at Ser-24. Thr-27 is a glycosylation site (O-linked (GalNAc...) threonine). Residues Asn-45, Asn-55, and Asn-87 are each glycosylated (N-linked (GlcNAc...) asparagine). 2 disulfide bridges follow: Cys-72–Cys-114 and Cys-106–Cys-139.

The protein belongs to the GM-CSF family. In terms of assembly, monomer. The signaling GM-CSF receptor complex is a dodecamer of two head-to-head hexamers of two alpha, two beta, and two ligand subunits.

Its subcellular location is the secreted. Functionally, cytokine that stimulates the growth and differentiation of hematopoietic precursor cells from various lineages, including granulocytes, macrophages, eosinophils and erythrocytes. The polypeptide is Granulocyte-macrophage colony-stimulating factor (CSF2) (Cavia porcellus (Guinea pig)).